We begin with the raw amino-acid sequence, 89 residues long: Elongation factor 1-beta (89 aa).

This sequence belongs to the EF-1-beta/EF-1-delta family.

Promotes the exchange of GDP for GTP in EF-1-alpha/GDP, thus allowing the regeneration of EF-1-alpha/GTP that could then be used to form the ternary complex EF-1-alpha/GTP/AAtRNA. In Methanosarcina barkeri (strain Fusaro / DSM 804), this protein is Elongation factor 1-beta.